The sequence spans 141 residues: Lutropin subunit beta (141 aa).

Positions 1–20 (MEMFQGLLLWLLLGVAGVWA) are cleaved as a signal peptide. 6 disulfides stabilise this stretch: Cys29–Cys77, Cys43–Cys92, Cys46–Cys130, Cys54–Cys108, Cys58–Cys110, and Cys113–Cys120. Asn33 carries N-linked (GlcNAc...) asparagine glycosylation.

This sequence belongs to the glycoprotein hormones subunit beta family. Heterodimer of a common alpha chain and a unique beta chain which confers biological specificity to thyrotropin, lutropin, follitropin and gonadotropin.

It is found in the secreted. Its function is as follows. Promotes spermatogenesis and ovulation by stimulating the testes and ovaries to synthesize steroids. The protein is Lutropin subunit beta (LHB) of Bos taurus (Bovine).